Consider the following 493-residue polypeptide: Glycerol kinase (493 aa).

ADP is bound at residue T11. 3 residues coordinate ATP: T11, T12, and S13. Sn-glycerol 3-phosphate is bound at residue T11. R15 lines the ADP pocket. The sn-glycerol 3-phosphate site is built by R80, E81, Y132, and D241. 5 residues coordinate glycerol: R80, E81, Y132, D241, and Q242. Residues T263 and G306 each contribute to the ADP site. Residues T263, G306, Q310, and G408 each contribute to the ATP site. G408 lines the ADP pocket.

This sequence belongs to the FGGY kinase family.

It catalyses the reaction glycerol + ATP = sn-glycerol 3-phosphate + ADP + H(+). The protein operates within polyol metabolism; glycerol degradation via glycerol kinase pathway; sn-glycerol 3-phosphate from glycerol: step 1/1. Its activity is regulated as follows. Inhibited by fructose 1,6-bisphosphate (FBP). In terms of biological role, key enzyme in the regulation of glycerol uptake and metabolism. Catalyzes the phosphorylation of glycerol to yield sn-glycerol 3-phosphate. The chain is Glycerol kinase from Cereibacter sphaeroides (strain ATCC 17025 / ATH 2.4.3) (Rhodobacter sphaeroides).